The primary structure comprises 424 residues: Double homeobox protein 4-like protein 2 (424 aa).

Polar residues predominate over residues 1-10 (MALPTPSDST). Disordered regions lie at residues 1 to 24 (MALP…RRRL), 72 to 102 (SRQL…TAVT), 148 to 167 (RHPG…CSAA), 218 to 362 (LQPS…LQEP), and 388 to 414 (QPLL…PLSE). 2 DNA-binding regions (homeobox) span residues 19–78 (GRRR…LRQH) and 94–153 (GRRK…PGQG). A compositionally biased stretch (basic and acidic residues) spans 265 to 274 (KSREDRDPQR). 2 stretches are compositionally biased toward low complexity: residues 278 to 302 (PGPC…LAPP) and 319 to 329 (AGAAWEPQAGA).

The protein resides in the nucleus. In terms of biological role, may be involved in transcriptional regulation. This is Double homeobox protein 4-like protein 2 (DUX4L2) from Homo sapiens (Human).